Reading from the N-terminus, the 504-residue chain is Protein Dok-7 (504 aa).

Residues 4 to 109 (AALVEGQVKL…WDARIRYALG (106 aa)) enclose the PH domain. An IRS-type PTB domain is found at 105-210 (RYALGEVHRF…RGISPTKGPF (106 aa)). 3 disordered regions span residues 210–229 (FGLR…TVEE), 249–351 (SHAG…YSSS), and 411–483 (LCLA…PHAG). Low complexity-rich tracts occupy residues 263-279 (LSSS…SASS) and 288-310 (SSSS…AGEA). Residues 331–341 (GRQSSSDSGIA) are compositionally biased toward polar residues.

As to quaternary structure, homodimer. Forms a heterotetramer composed of 2 DOK7 and 2 MUSK molecules which facilitates MUSK trans-autophosphorylation on tyrosine residue and activation. Interacts (via IRS-type PTB domain) with MUSK (via cytoplasmic part); requires MUSK phosphorylation. As to expression, preferentially expressed in skeletal muscle and heart. Present in thigh muscle, diaphragm and heart but not in the liver or spleen (at protein level).

The protein resides in the cell membrane. It is found in the synapse. In terms of biological role, probable muscle-intrinsic activator of MUSK that plays an essential role in neuromuscular synaptogenesis. Acts in aneural activation of MUSK and subsequent acetylcholine receptor (AchR) clustering in myotubes. Induces autophosphorylation of MUSK. In Homo sapiens (Human), this protein is Protein Dok-7 (DOK7).